The sequence spans 231 residues: Sugar fermentation stimulation protein homolog (231 aa).

This sequence belongs to the SfsA family.

The sequence is that of Sugar fermentation stimulation protein homolog from Geobacter sp. (strain M21).